Consider the following 120-residue polypeptide: Ribosome-binding factor A (120 aa).

This sequence belongs to the RbfA family. Monomer. Binds 30S ribosomal subunits, but not 50S ribosomal subunits or 70S ribosomes.

The protein localises to the cytoplasm. Functionally, one of several proteins that assist in the late maturation steps of the functional core of the 30S ribosomal subunit. Associates with free 30S ribosomal subunits (but not with 30S subunits that are part of 70S ribosomes or polysomes). Required for efficient processing of 16S rRNA. May interact with the 5'-terminal helix region of 16S rRNA. This is Ribosome-binding factor A from Rickettsia africae (strain ESF-5).